Here is a 227-residue protein sequence, read N- to C-terminus: Phosphoribosylformylglycinamidine synthase subunit PurQ (227 aa).

A Glutamine amidotransferase type-1 domain is found at 3–227 (FAVCVFPGSN…LMLWYSLLSD (225 aa)). The Nucleophile role is filled by C86. Active-site residues include H203 and E205.

In terms of assembly, part of the FGAM synthase complex composed of 1 PurL, 1 PurQ and 2 PurS subunits.

It localises to the cytoplasm. It catalyses the reaction N(2)-formyl-N(1)-(5-phospho-beta-D-ribosyl)glycinamide + L-glutamine + ATP + H2O = 2-formamido-N(1)-(5-O-phospho-beta-D-ribosyl)acetamidine + L-glutamate + ADP + phosphate + H(+). The catalysed reaction is L-glutamine + H2O = L-glutamate + NH4(+). Its pathway is purine metabolism; IMP biosynthesis via de novo pathway; 5-amino-1-(5-phospho-D-ribosyl)imidazole from N(2)-formyl-N(1)-(5-phospho-D-ribosyl)glycinamide: step 1/2. Functionally, part of the phosphoribosylformylglycinamidine synthase complex involved in the purines biosynthetic pathway. Catalyzes the ATP-dependent conversion of formylglycinamide ribonucleotide (FGAR) and glutamine to yield formylglycinamidine ribonucleotide (FGAM) and glutamate. The FGAM synthase complex is composed of three subunits. PurQ produces an ammonia molecule by converting glutamine to glutamate. PurL transfers the ammonia molecule to FGAR to form FGAM in an ATP-dependent manner. PurS interacts with PurQ and PurL and is thought to assist in the transfer of the ammonia molecule from PurQ to PurL. The sequence is that of Phosphoribosylformylglycinamidine synthase subunit PurQ from Aquifex aeolicus (strain VF5).